A 102-amino-acid polypeptide reads, in one-letter code: Large ribosomal subunit protein bL21 (102 aa).

Belongs to the bacterial ribosomal protein bL21 family. As to quaternary structure, part of the 50S ribosomal subunit. Contacts protein L20.

In terms of biological role, this protein binds to 23S rRNA in the presence of protein L20. In Staphylococcus aureus, this protein is Large ribosomal subunit protein bL21.